Here is a 311-residue protein sequence, read N- to C-terminus: MNEIEVDNLSHTNKNVATDNINNNNNDIELETIPNDSNNSNNNNNNNNNNNNNNNNNNNNNNNSNSNDIELETEPNNSNNNNNNNNNNNNNNNNNNNNNNNNNNNNNNKNENNNKIKNEKINILLSIKLYFIQYFKKWKGGEKSPVRADLEEIGWSWLSSFIGILVLALLHYRVTVEKETIFLLGSFAASAVLIFGAPKSPLAQPRNLVLGHIVSATVGSIIRVALVYTNAQTEVACALAVSLAIVGMHFTKSIHPPGGATALICVMSAEQRWRGFYYIFVPVASGSLTMLLTALIVNNFARKRKYPVFWW.

A disordered region spans residues 1–113; that stretch reads MNEIEVDNLS…NNNNNKNENN (113 aa). N-linked (GlcNAc...) asparagine glycosylation is present at Asn8. Positions 9–18 are enriched in polar residues; the sequence is LSHTNKNVAT. N-linked (GlcNAc...) asparagine glycans are attached at residues Asn35, Asn38, Asn62, and Asn76. Composition is skewed to low complexity over residues 37–67 and 76–111; these read SNNSNNNNNNNNNNNNNNNNNNNNNNNSNSN and NNSNNNNNNNNNNNNNNNNNNNNNNNNNNNNNNKNE. Residues 95-124 are a coiled coil; sequence NNNNNNNNNNNNNNKNENNNKIKNEKINIL. Helical transmembrane passes span 150–170, 181–201, 208–228, 235–255, and 276–296; these read LEEIGWSWLSSFIGILVLALL, IFLLGSFAASAVLIFGAPKSP, LVLGHIVSATVGSIIRVALVY, VACALAVSLAIVGMHFTKSIH, and FYYIFVPVASGSLTMLLTALI.

The protein resides in the membrane. This chain is Transmembrane protein DDB_G0273707/DDB_G0273361, found in Dictyostelium discoideum (Social amoeba).